The following is a 426-amino-acid chain: UPF0761 membrane protein Nmul_A0452 (426 aa).

6 helical membrane passes run 48–68 (LLSLVPMLAIGLSVIAAFPAF), 106–126 (LTAIGIAFLGVTALALMLTID), 145–165 (LLIYWSVLTIGPLLIGASLSL), 187–207 (LLRLSPLVLTSIAFSASYLIV), 217–237 (AIAGGVAAAIGFEIMKEGFAF), and 255–275 (IPIFLLWLYLSWLMVLLGAVI).

It belongs to the UPF0761 family.

It is found in the cell inner membrane. The sequence is that of UPF0761 membrane protein Nmul_A0452 from Nitrosospira multiformis (strain ATCC 25196 / NCIMB 11849 / C 71).